Here is a 175-residue protein sequence, read N- to C-terminus: Thioredoxin-like protein CITRX, chloroplastic (175 aa).

A chloroplast-targeting transit peptide spans 1-64 (MQAASLAFHP…KPPAVGKYVR (64 aa)). One can recognise a Thioredoxin domain in the interval 74 to 175 (AKEIQELIKG…MMRDIIDNDL (102 aa)). Residues cysteine 98 and cysteine 101 each act as nucleophile in the active site. Cysteine 98 and cysteine 101 are joined by a disulfide.

It belongs to the thioredoxin family. Plant CITRX-type subfamily. As to quaternary structure, interacts with Cf-9 resistance protein.

Its subcellular location is the plastid. The protein localises to the chloroplast. Probable thiol-disulfide oxidoreductase that may play a role in proper chloroplast development. This chain is Thioredoxin-like protein CITRX, chloroplastic, found in Solanum lycopersicum (Tomato).